The following is a 731-amino-acid chain: Pre-B-cell leukemia transcription factor-interacting protein 1 (731 aa).

Residues 1-10 show a composition bias toward polar residues; sequence MASCPDSDNS. The segment at 1-155 is disordered; that stretch reads MASCPDSDNS…SSSDDDTDVD (155 aa). Ser-43 is modified (phosphoserine). Polar residues-rich tracts occupy residues 62–75 and 121–132; these read LFQTESPQSGSILT and LEGQSPPQSLPS. Phosphoserine is present on residues Ser-129, Ser-146, Ser-147, and Ser-148. At Thr-152 the chain carries Phosphothreonine. Residues 270–348 are a coiled coil; it reads LLLDKLAKEN…QGLEADCVRG (79 aa). Disordered stretches follow at residues 354-377, 447-572, and 698-731; these read LSGGRGPQGDKAIREQGPREQEPE, GQDP…DPLP, and LKKRSGKKDKHSQSPRAAGPREGHSHSHHHHHRG. A compositionally biased stretch (basic and acidic residues) spans 364–375; sequence KAIREQGPREQE. Positions 377–417 form a coiled coil; the sequence is ELSFLKQKEQLEAEAQALRQELERQRRLLGSVQQDLERSLQ. 3 stretches are compositionally biased toward basic and acidic residues: residues 472 to 499, 508 to 543, and 551 to 569; these read WSGKEKWWDGQRDRKAEHWKHKKEESGR, QEDREPAGRWKEGRPRVEESGSKKEGKRQGPKEPPR, and SGEKQKQPRWREGTKDSHD. The short motif at 485-505 is the Nuclear localization signal element; the sequence is RKAEHWKHKKEESGRERKKNW. The residue at position 567 (Ser-567) is a Phosphoserine. Positions 695 to 720 match the Nuclear localization signal motif; sequence DKALKKRSGKKDKHSQSPRAAGPREG. The span at 698–707 shows a compositional bias: basic residues; the sequence is LKKRSGKKDK.

In terms of assembly, interacts with TEX11. Interacts with ESR1, PBX1, PBX2 and PBX3. As to expression, expressed in early hematopoietic precursors.

The protein resides in the cytoplasm. The protein localises to the cytoskeleton. It is found in the nucleus. In terms of biological role, regulator of pre-B-cell leukemia transcription factors (BPXs) function. Inhibits the binding of PBX1-HOX complex to DNA and blocks the transcriptional activity of E2A-PBX1. Tethers estrogen receptor-alpha (ESR1) to microtubules and allows them to influence estrogen receptors-alpha signaling. The protein is Pre-B-cell leukemia transcription factor-interacting protein 1 (PBXIP1) of Homo sapiens (Human).